The chain runs to 797 residues: Plakophilin-3 (797 aa).

A disordered region spans residues 58 to 81 (GQQSRHNGSAELDGSAESARGMPR). R81 is subject to Omega-N-methylarginine. Residues S123, S180, and S183 each carry the phosphoserine modification. Y195 is subject to Phosphotyrosine. A compositionally biased stretch (low complexity) spans 219–228 (ASSGSSRAGG). The interval 219–241 (ASSGSSRAGGLDWPEATEGPPSR) is disordered. Position 240 is a phosphoserine (S240). T250 is subject to Phosphothreonine. The interval 253–274 (RFQSSHRSRGGTGSVSGAGLEP) is disordered. R261 is modified (omega-N-methylarginine). A required for interaction with SFN region spans residues 283 to 288 (SLSLSL). 4 positions are modified to phosphoserine: S285, S313, S314, and S331. Residues 294-724 (LPDVRGLDSY…AEVLVNIIAV (431 aa)) form a required for interaction with GSK3B region. ARM repeat units follow at residues 305 to 348 (GHRT…HRCY), 351 to 390 (AAAKKQARSLQAVPRLVKLFNHANQEVQRHATGAMRNLIY), 393 to 432 (VDNKLALVEENGIFELLRTLREQDDELRKNVTGILWNLSS), 449 to 487 (TDLVLSPLSGAGGPPLIQQNASEAEIFYNATGFLRNLSS), 491 to 536 (ATRQ…NLSY), 596 to 637 (PKGL…NITA), 645 to 684 (VLSRLALEQERILNPLLDRVRTADHNQLRSLTGLIRNLSR), and 689 to 730 (KDEM…NLVV). The tract at residues 516–797 (VGKCEDKSVE…GYRKEDFLGP (282 aa)) is required for binding to PKP2 mRNA.

It belongs to the beta-catenin family. Found in a complex composed of CDH1, RAP1A and PKP3; PKP3 acts as a scaffold protein within the complex, the complex is required for CDH1 localization to mature desmosome cell junctions. Interacts with FXR1; the interaction facilitates the binding of PKP3 to PKP2 mRNA. Interacts (via ARM repeats) with GSK3B; the interaction may be involved in PKP3 protein degradation. Interacts with hyperphosphorylated and hypophosphorylated RB1; the interaction inhibits RB1 interaction with and repression of the transcription factor E2F1, potentially via sequestering RB1 to the cytoplasm. Interacts with CDKN1A; the interaction sequesters CDKN1A to the cytoplasm thereby repressing its role as an inhibitor of CDK4- and CDK6-driven RB1 phosphorylation. Interacts (via N-terminus) with SFN; the interaction maintains the cytoplasmic pool of PKP3, facilitates PKP3 exchange at desmosomes and restricts PKP3 localization to existing desmosome cell junctions. Interacts (via N-terminus) with JUP; the interaction is required for PKP3 localization to desmosome cell-cell junctions. Phosphorylated at Ser-285 when localized to the cytoplasm, PKP3 at desmosome cell junctions is not phosphorylated. Phosphorylation at Try-195 by SRC is induced by reactive oxygen species and potentially acts as a release mechanism from desmosome cell-cell junctions. As to expression, expressed in all layers of the epidermis, but is most abundant in the basal layer (at protein level). Expressed in keratinocytes of the epidermis at birth (at protein level). Expressed in the anagen non-keratinized inner root sheath cuticle and hair cuticle (at protein level). Also expressed in the matrix, precursors of the inner root sheath and hair shaft lineages (at protein level). Expressed at apical membranes in the outer hair root sheath and basal layer keratinocytes (at protein level). Expressed in intestinal epithelial cells and lamina propria of the ileum (at protein level). Expressed in keratinocytes (at protein level).

It is found in the nucleus. It localises to the cell junction. Its subcellular location is the desmosome. The protein resides in the cytoplasm. The protein localises to the cell membrane. It is found in the adherens junction. Its function is as follows. A component of desmosome cell-cell junctions which are required for positive regulation of cellular adhesion. Required for the localization of DSG2, DSP and PKP2 to mature desmosome junctions. May also play a role in the maintenance of DSG3 protein abundance in keratinocytes. Required for the formation of DSP-containing desmosome precursors in the cytoplasm during desmosome assembly. Also regulates the accumulation of CDH1 to mature desmosome junctions, via cAMP-dependent signaling and its interaction with activated RAP1A. Positively regulates the stabilization of PKP2 mRNA and therefore protein abundance, via its interaction with FXR1, may also regulate the protein abundance of DSP via the same mechanism. May also regulate the protein abundance of the desmosome component PKP1. Required for the organization of desmosome junctions at intercellular borders between basal keratinocytes of the epidermis, as a result plays a role in maintenance of the dermal barrier and regulation of the dermal inflammatory response. Required during epidermal keratinocyte differentiation for cell adherence at tricellular cell-cell contacts, via regulation of the timely formation of adherens junctions and desmosomes in a calcium-dependent manner, and may also play a role in the organization of the intracellular actin fiber belt. Acts as a negative regulator of the inflammatory response in hematopoietic cells of the skin and intestine, via modulation of proinflammatory cytokine production. Important for epithelial barrier maintenance in the intestine to reduce intestinal permeability, thereby plays a role in protection from intestinal-derived endotoxemia. Required for the development of hair follicles, via a role in the regulation of inner root sheaf length, correct alignment and anterior-posterior polarity of hair follicles. Promotes proliferation and cell-cycle G1/S phase transition of keratinocytes. Promotes E2F1-driven transcription of G1/S phase promoting genes by acting to release E2F1 from its inhibitory interaction with RB1, via sequestering RB1 and CDKN1A to the cytoplasm and thereby increasing CDK4- and CDK6-driven phosphorylation of RB1. May act as a scaffold protein to facilitate MAPK phosphorylation of RPS6KA protein family members and subsequently promote downstream EGFR signaling. May play a role in the positive regulation of transcription of Wnt-mediated TCF-responsive target genes. The protein is Plakophilin-3 (Pkp3) of Mus musculus (Mouse).